We begin with the raw amino-acid sequence, 387 residues long: Mitogen-activated protein kinase homolog MMK1 (387 aa).

Positions 55-340 constitute a Protein kinase domain; it reads KPPIMPIGKG…VEDALAHPYL (286 aa). ATP contacts are provided by residues 61–69 and Lys84; that span reads IGKGAYGIV. Asp181 serves as the catalytic Proton acceptor. Position 213 is a phosphothreonine (Thr213). The short motif at 213-215 is the TXY element; that stretch reads TEY. Tyr215 is modified (phosphotyrosine).

It belongs to the protein kinase superfamily. CMGC Ser/Thr protein kinase family. MAP kinase subfamily. Mg(2+) is required as a cofactor. Dually phosphorylated on Thr-213 and Tyr-215, which activates the enzyme. Autophosphorylated. As to expression, roots and stems.

It catalyses the reaction L-seryl-[protein] + ATP = O-phospho-L-seryl-[protein] + ADP + H(+). It carries out the reaction L-threonyl-[protein] + ATP = O-phospho-L-threonyl-[protein] + ADP + H(+). Activated by tyrosine and threonine phosphorylation. In terms of biological role, may play a role in the mitogenic induction of symbiotic root nodules on Alfalfa by Rhizobium signal molecules. The chain is Mitogen-activated protein kinase homolog MMK1 (MMK1) from Medicago sativa (Alfalfa).